A 255-amino-acid polypeptide reads, in one-letter code: Putative SET domain-containing protein L678 (255 aa).

An SET domain is found at N5–V176. Positions L235 to K255 are disordered.

This sequence belongs to the class V-like SAM-binding methyltransferase superfamily.

In Acanthamoeba polyphaga mimivirus (APMV), this protein is Putative SET domain-containing protein L678.